The sequence spans 372 residues: Glycerophosphodiester phosphodiesterase GDPD6 (372 aa).

Positions Met1–Ser21 are cleaved as a signal peptide. A disordered region spans residues Lys32 to Glu58. Residues Pro44 to Gln362 form the GP-PDE domain. N-linked (GlcNAc...) asparagine glycans are attached at residues Asn120, Asn239, and Asn260.

This sequence belongs to the glycerophosphoryl diester phosphodiesterase family. As to expression, expressed in flowers and siliques.

It catalyses the reaction a sn-glycero-3-phosphodiester + H2O = an alcohol + sn-glycerol 3-phosphate + H(+). This is Glycerophosphodiester phosphodiesterase GDPD6 from Arabidopsis thaliana (Mouse-ear cress).